A 280-amino-acid chain; its full sequence is Ribosomal RNA small subunit methyltransferase A (280 aa).

Residues asparagine 28, leucine 30, glycine 55, glutamate 77, aspartate 103, and asparagine 122 each contribute to the S-adenosyl-L-methionine site.

This sequence belongs to the class I-like SAM-binding methyltransferase superfamily. rRNA adenine N(6)-methyltransferase family. RsmA subfamily.

Its subcellular location is the cytoplasm. The catalysed reaction is adenosine(1518)/adenosine(1519) in 16S rRNA + 4 S-adenosyl-L-methionine = N(6)-dimethyladenosine(1518)/N(6)-dimethyladenosine(1519) in 16S rRNA + 4 S-adenosyl-L-homocysteine + 4 H(+). Functionally, specifically dimethylates two adjacent adenosines (A1518 and A1519) in the loop of a conserved hairpin near the 3'-end of 16S rRNA in the 30S particle. May play a critical role in biogenesis of 30S subunits. This is Ribosomal RNA small subunit methyltransferase A from Dinoroseobacter shibae (strain DSM 16493 / NCIMB 14021 / DFL 12).